Here is a 498-residue protein sequence, read N- to C-terminus: Phosphatidylserine synthase (498 aa).

Residues 1–65 (MKKRTNSRGT…GSVSSAGARR (65 aa)) are disordered. The Cytoplasmic segment spans residues 1–92 (MKKRTNSRGT…VDDISLDFFY (92 aa)). The span at 7-25 (SRGTPTSSGDALLDTSFSS) shows a compositional bias: polar residues. The helical transmembrane segment at 93–113 (KPHTITLLAVSVLAVMYFAFV) threads the bilayer. The Lumenal portion of the chain corresponds to 114-122 (RNEANVDEN). A helical transmembrane segment spans residues 123 to 143 (LWAGLLCIVFFFLIVSVIAFP). At 144–153 (NGPFTRPHPA) the chain is on the cytoplasmic side. A helical membrane pass occupies residues 154-174 (VWRILFGCSVLYLLTLQFLMF). Residues 175-239 (QNYPTIRSIF…AFKAILIRHM (65 aa)) lie on the Lumenal side of the membrane. Asn205 is a glycosylation site (N-linked (GlcNAc...) asparagine). A helical membrane pass occupies residues 240–260 (GILWAISVMWEITEITFAHLL). Topologically, residues 261 to 266 (PNFIEC) are cytoplasmic. Residues 267-287 (WWDALILDVIICNGLGIWMGL) traverse the membrane as a helical segment. The Lumenal portion of the chain corresponds to 288 to 339 (KICQILEMREYKWASIKDISTTTGKIKRAMLQFTPESWSAIRWLDPKSTAMR). A helical membrane pass occupies residues 340 to 360 (FAAVIQLVIFWQVTELNTFFL). Topologically, residues 361-367 (KHIFEMP) are cytoplasmic. The helical transmembrane segment at 368–388 (PDHFIVIGRLIFIGLFVAPSV) threads the bilayer. At 389-402 (RQYYVYVTDTRCKR) the chain is on the lumenal side. A helical transmembrane segment spans residues 403-423 (VGTQCWVYGAIMVSEAILCIK). Topologically, residues 424 to 436 (NGKELFERTQAIN) are cytoplasmic. A helical transmembrane segment spans residues 437 to 457 (IVLWLTVQVIISVAFVYLAVY). At 458–498 (WQQRQLKKVSSTPAKTKETIPASSSSPSKGKLSPQKEKKLK) the chain is on the lumenal side. Positions 465 to 498 (KVSSTPAKTKETIPASSSSPSKGKLSPQKEKKLK) are disordered. Positions 478 to 490 (PASSSSPSKGKLS) are enriched in low complexity.

This sequence belongs to the phosphatidyl serine synthase family.

It localises to the endoplasmic reticulum membrane. The enzyme catalyses a 1,2-diacyl-sn-glycero-3-phosphoethanolamine + L-serine = a 1,2-diacyl-sn-glycero-3-phospho-L-serine + ethanolamine. It participates in phospholipid metabolism; phosphatidylserine biosynthesis. Catalyzes a base-exchange reaction in which the polar head group of phosphatidylethanolamine (PE) is replaced by L-serine. The protein is Phosphatidylserine synthase of Drosophila melanogaster (Fruit fly).